The following is a 289-amino-acid chain: MRIRLDLAYDGTDFHGWAKQGTSDLRTVQKVLEDNLSMVLRETVELTVAGRTDAGVHAAGQVAHFDIPAHALEQRSIDGDPSKLVRRLGRLLPDDIRVHGVRFAEPGFDARFSAMRRHYVYRITTHPAGALPTRRHDTAQWPKPVELERMQLAADALLGLHDFVAFCKAKPHATTVRELQKFAWKDVSTDIEPQVYEAHVVADAFCWSMVRSLVGSCMAVGEGRRGSGFTAELLDASERSPMVPVAPAKGLSLVGVDYPSADKLQERALETRAVREFPDASASLKLDDE.

Aspartate 53 acts as the Nucleophile in catalysis. Tyrosine 119 lines the substrate pocket.

The protein belongs to the tRNA pseudouridine synthase TruA family. In terms of assembly, homodimer.

It carries out the reaction uridine(38/39/40) in tRNA = pseudouridine(38/39/40) in tRNA. In terms of biological role, formation of pseudouridine at positions 38, 39 and 40 in the anticodon stem and loop of transfer RNAs. This is tRNA pseudouridine synthase A from Corynebacterium glutamicum (strain ATCC 13032 / DSM 20300 / JCM 1318 / BCRC 11384 / CCUG 27702 / LMG 3730 / NBRC 12168 / NCIMB 10025 / NRRL B-2784 / 534).